A 254-amino-acid polypeptide reads, in one-letter code: uncharacterized protein (254 aa).

The active-site Acyl-thioester intermediate is the C71. Residues H110 and D125 contribute to the active site.

Belongs to the arylamine N-acetyltransferase family.

This is an uncharacterized protein from Bacillus subtilis (strain 168).